Reading from the N-terminus, the 68-residue chain is Large ribosomal subunit protein uL30 (68 aa).

Residues 1 to 26 (MSAKKSASKATVTVQQIGSPLRREPS) form a disordered region. Residues 8-18 (SKATVTVQQIG) are compositionally biased toward polar residues.

This sequence belongs to the universal ribosomal protein uL30 family. As to quaternary structure, part of the 50S ribosomal subunit.

This chain is Large ribosomal subunit protein uL30, found in Parvibaculum lavamentivorans (strain DS-1 / DSM 13023 / NCIMB 13966).